A 391-amino-acid polypeptide reads, in one-letter code: Alkanesulfonate monooxygenase (391 aa).

The protein belongs to the SsuD family.

The catalysed reaction is an alkanesulfonate + FMNH2 + O2 = an aldehyde + FMN + sulfite + H2O + 2 H(+). Functionally, catalyzes the desulfonation of aliphatic sulfonates. The chain is Alkanesulfonate monooxygenase from Paracidovorax citrulli (strain AAC00-1) (Acidovorax citrulli).